Consider the following 322-residue polypeptide: Malate dehydrogenase (322 aa).

NAD(+) contacts are provided by residues 10-15 and aspartate 34; that span reads GSGQIG. 2 residues coordinate substrate: arginine 83 and arginine 89. Residues asparagine 96 and 119 to 121 each bind NAD(+); that span reads ITN. Residues asparagine 121 and arginine 152 each coordinate substrate. The active-site Proton acceptor is histidine 176.

This sequence belongs to the LDH/MDH superfamily. MDH type 3 family.

The enzyme catalyses (S)-malate + NAD(+) = oxaloacetate + NADH + H(+). Its function is as follows. Catalyzes the reversible oxidation of malate to oxaloacetate. In Nitrobacter hamburgensis (strain DSM 10229 / NCIMB 13809 / X14), this protein is Malate dehydrogenase.